The sequence spans 416 residues: DNA-guanine transglycosylase (416 aa).

Aspartate 95 serves as the catalytic Proton acceptor. Aspartate 256 acts as the Nucleophile in catalysis. Zn(2+)-binding residues include cysteine 368, cysteine 370, cysteine 373, and histidine 395.

This sequence belongs to the DNA-guanine transglycosylase family. Zn(2+) serves as cofactor.

Part of the dpd cluster involved in the insertion of 7-deazaguanine derivatives in DNA. DpdA may insert 7-cyano-7-deazaguanine (preQ0) into DNA with the help of DpdB. DpdA and dpdB are necessary and sufficient to synthesize 2'-deoxy-7-cyano-7-deazaguanosine (dPreQ0). This Salmonella montevideo protein is DNA-guanine transglycosylase.